The chain runs to 145 residues: Ribosomal RNA large subunit methyltransferase H (145 aa).

Residues Leu-64, Gly-93, and 112–117 (LSALTF) contribute to the S-adenosyl-L-methionine site.

Belongs to the RNA methyltransferase RlmH family. Homodimer.

The protein resides in the cytoplasm. The enzyme catalyses pseudouridine(1915) in 23S rRNA + S-adenosyl-L-methionine = N(3)-methylpseudouridine(1915) in 23S rRNA + S-adenosyl-L-homocysteine + H(+). Functionally, specifically methylates the pseudouridine at position 1915 (m3Psi1915) in 23S rRNA. This chain is Ribosomal RNA large subunit methyltransferase H, found in Prochlorococcus marinus (strain SARG / CCMP1375 / SS120).